The chain runs to 239 residues: Sugar fermentation stimulation protein homolog (239 aa).

The protein belongs to the SfsA family.

The chain is Sugar fermentation stimulation protein homolog from Agrobacterium fabrum (strain C58 / ATCC 33970) (Agrobacterium tumefaciens (strain C58)).